We begin with the raw amino-acid sequence, 192 residues long: UPF0312 protein ECA1782 (192 aa).

A signal peptide spans 1-23 (MLKKTLLSLTAVSMLASAGSALA).

It belongs to the UPF0312 family. Type 1 subfamily.

The protein resides in the periplasm. The chain is UPF0312 protein ECA1782 from Pectobacterium atrosepticum (strain SCRI 1043 / ATCC BAA-672) (Erwinia carotovora subsp. atroseptica).